A 210-amino-acid chain; its full sequence is 3-hexulose-6-phosphate synthase (210 aa).

It belongs to the HPS/KGPDC family. HPS subfamily.

The enzyme catalyses D-ribulose 5-phosphate + formaldehyde = D-arabino-hex-3-ulose 6-phosphate. It functions in the pathway one-carbon metabolism; formaldehyde assimilation via RuMP pathway; D-fructose 6-phosphate from D-ribulose 5-phosphate and formaldehyde: step 1/2. Its function is as follows. Catalyzes the condensation of ribulose 5-phosphate with formaldehyde to form 3-hexulose 6-phosphate. The sequence is that of 3-hexulose-6-phosphate synthase from Staphylococcus haemolyticus (strain JCSC1435).